The chain runs to 161 residues: NADH-quinone oxidoreductase subunit I (161 aa).

2 consecutive 4Fe-4S ferredoxin-type domains span residues 52-82 (LRRY…IESS) and 92-121 (TRYD…QGPN). Residues Cys-62, Cys-65, Cys-68, Cys-72, Cys-101, Cys-104, Cys-107, and Cys-111 each coordinate [4Fe-4S] cluster.

It belongs to the complex I 23 kDa subunit family. As to quaternary structure, NDH-1 is composed of 14 different subunits. Subunits NuoA, H, J, K, L, M, N constitute the membrane sector of the complex. The cofactor is [4Fe-4S] cluster.

The protein localises to the cell inner membrane. It carries out the reaction a quinone + NADH + 5 H(+)(in) = a quinol + NAD(+) + 4 H(+)(out). Functionally, NDH-1 shuttles electrons from NADH, via FMN and iron-sulfur (Fe-S) centers, to quinones in the respiratory chain. The immediate electron acceptor for the enzyme in this species is believed to be ubiquinone. Couples the redox reaction to proton translocation (for every two electrons transferred, four hydrogen ions are translocated across the cytoplasmic membrane), and thus conserves the redox energy in a proton gradient. This is NADH-quinone oxidoreductase subunit I from Pelagibacter ubique (strain HTCC1062).